The following is a 552-amino-acid chain: Urocanate hydratase (552 aa).

Residues 48-49 (GG), Q126, 172-174 (GMG), E192, R197, 238-239 (NA), 259-263 (QTSAH), 269-270 (YV), and Y318 contribute to the NAD(+) site. Residue C406 is part of the active site. G488 provides a ligand contact to NAD(+).

It belongs to the urocanase family. NAD(+) serves as cofactor.

Its subcellular location is the cytoplasm. It catalyses the reaction 4-imidazolone-5-propanoate = trans-urocanate + H2O. It functions in the pathway amino-acid degradation; L-histidine degradation into L-glutamate; N-formimidoyl-L-glutamate from L-histidine: step 2/3. Catalyzes the conversion of urocanate to 4-imidazolone-5-propionate. This is Urocanate hydratase from Herpetosiphon aurantiacus (strain ATCC 23779 / DSM 785 / 114-95).